A 243-amino-acid chain; its full sequence is 5'-methylthioadenosine/S-adenosylhomocysteine nucleosidase (243 aa).

Catalysis depends on Glu12, which acts as the Proton acceptor. Residues Gly78, Met158, and 179–180 (ME) contribute to the substrate site. Asp203 serves as the catalytic Proton donor.

The protein belongs to the PNP/UDP phosphorylase family. MtnN subfamily.

It carries out the reaction S-adenosyl-L-homocysteine + H2O = S-(5-deoxy-D-ribos-5-yl)-L-homocysteine + adenine. The enzyme catalyses S-methyl-5'-thioadenosine + H2O = 5-(methylsulfanyl)-D-ribose + adenine. The catalysed reaction is 5'-deoxyadenosine + H2O = 5-deoxy-D-ribose + adenine. The protein operates within amino-acid biosynthesis; L-methionine biosynthesis via salvage pathway; S-methyl-5-thio-alpha-D-ribose 1-phosphate from S-methyl-5'-thioadenosine (hydrolase route): step 1/2. Functionally, catalyzes the irreversible cleavage of the glycosidic bond in both 5'-methylthioadenosine (MTA) and S-adenosylhomocysteine (SAH/AdoHcy) to adenine and the corresponding thioribose, 5'-methylthioribose and S-ribosylhomocysteine, respectively. Also cleaves 5'-deoxyadenosine, a toxic by-product of radical S-adenosylmethionine (SAM) enzymes, into 5-deoxyribose and adenine. The chain is 5'-methylthioadenosine/S-adenosylhomocysteine nucleosidase from Colwellia psychrerythraea (strain 34H / ATCC BAA-681) (Vibrio psychroerythus).